A 449-amino-acid chain; its full sequence is Na(+)/H(+) antiporter NhaA (449 aa).

Transmembrane regions (helical) follow at residues 30-50 (IFLIIATIVALLLANSQWAGA), 69-89 (FGLTIEEWINDGLMAIFFLVA), 112-132 (LLAALGGMAVPALIFISLNLG), 138-158 (GWGIPMATDIAYSLGIIGLLG), 168-188 (FLIALAIADDIGAILVIALFY), 192-212 (LSWIYLGSGMGAFGLLLLMNW), 218-238 (LIWYIIIGIILWYCFLNSGIH), 241-261 (IAGVLFAITIPIVPKLDSKIL), 312-332 (SLVDFNAFFIIPIFAVANAGV), 348-368 (LGILLGLAIGKVTGIGIFTLI), 386-406 (IIGIGMIAGIGFTMSLFITNL), and 419-439 (ISILIASLLAAIGGAVILLLT).

It belongs to the NhaA Na(+)/H(+) (TC 2.A.33) antiporter family.

It localises to the cell inner membrane. It carries out the reaction Na(+)(in) + 2 H(+)(out) = Na(+)(out) + 2 H(+)(in). Its function is as follows. Na(+)/H(+) antiporter that extrudes sodium in exchange for external protons. This chain is Na(+)/H(+) antiporter NhaA, found in Christiangramia forsetii (strain DSM 17595 / CGMCC 1.15422 / KT0803) (Gramella forsetii).